Reading from the N-terminus, the 322-residue chain is MKVLWAALLVAFLAGCQGKMEPELEREPELEREPELHQQADWQSGQPWELALGRFWDYLRWVQTLSEQVQEELLSSQVTQELTALMDETMKELKAYKSELEEQLSPVAEETRARLSKELQAAQARLGADMEDVRSRLAXYRSEVQAMLGQSXDELRARLASHLRKLRKRLLRDVDDLQKRLAVYQAGAREGAERGVSAIRERLVPLVEQGRARAATVGSSLAGQPLQERAQAWGERLRARMEEVGSRTRDRLDEVKEQVEEVRAKLEEQAQQMRLQAEAFQARLKSWFEPLVEDMQRQWAGLVEKVQAAVGASAAPVPGDNH.

The first 18 residues, 1-18 (MKVLWAALLVAFLAGCQG), serve as a signal peptide directing secretion. 8 consecutive repeat copies span residues 84–105 (ALMDETMKELKAYKSELEEQLS), 106–127 (PVAEETRARLSKELQAAQARLG), 128–149 (ADMEDVRSRLAXYRSEVQAMLG), 150–171 (QSXDELRARLASHLRKLRKRLL), 172–193 (RDVDDLQKRLAVYQAGAREGAE), 194–215 (RGVSAIRERLVPLVEQGRARAA), 216–238 (TVGSSLAGQPLQERAQAWGERLR), and 239–260 (ARMEEVGSRTRDRLDEVKEQVE). Residues 84-260 (ALMDETMKEL…RLDEVKEQVE (177 aa)) form an 8 X 22 AA approximate tandem repeats region. Methionine sulfoxide is present on methionine 147. Serine 151 carries the post-translational modification Phosphoserine. Residues 162–172 (HLRKLRKRLLR) are LDL and other lipoprotein receptors binding. Residue 166–169 (LRKR) coordinates heparin. The lipid-binding and lipoprotein association stretch occupies residues 214 to 295 (AATVGSSLAG…SWFEPLVEDM (82 aa)). An O-linked (GalNAc...) threonine glycan is attached at threonine 216. Position 234–241 (234–241 (GERLRARM)) interacts with heparin. The segment at 271–322 (QQMRLQAEAFQARLKSWFEPLVEDMQRQWAGLVEKVQAAVGASAAPVPGDNH) is homooligomerization. The specificity for association with VLDL stretch occupies residues 283 to 295 (RLKSWFEPLVEDM).

Belongs to the apolipoprotein A1/A4/E family. As to quaternary structure, homotetramer. May interact with ABCA1; functionally associated with ABCA1 in the biogenesis of HDLs. May interact with APP/A4 amyloid-beta peptide; the interaction is extremely stable in vitro but its physiological significance is unclear. May interact with MAPT. May interact with MAP2. In the cerebrospinal fluid, interacts with secreted SORL1. Interacts with PMEL; this allows the loading of PMEL luminal fragment on ILVs to induce fibril nucleation. Post-translationally, APOE exists as multiple glycosylated and sialylated glycoforms within cells and in plasma. The extent of glycosylation and sialylation are tissue and context specific. In terms of processing, glycated in plasma VLDL. Phosphorylated by FAM20C in the extracellular medium.

It localises to the secreted. The protein resides in the extracellular space. It is found in the extracellular matrix. The protein localises to the extracellular vesicle. Its subcellular location is the endosome. It localises to the multivesicular body. Functionally, APOE is an apolipoprotein, a protein associating with lipid particles, that mainly functions in lipoprotein-mediated lipid transport between organs via the plasma and interstitial fluids. APOE is a core component of plasma lipoproteins and is involved in their production, conversion and clearance. Apolipoproteins are amphipathic molecules that interact both with lipids of the lipoprotein particle core and the aqueous environment of the plasma. As such, APOE associates with chylomicrons, chylomicron remnants, very low density lipoproteins (VLDL) and intermediate density lipoproteins (IDL) but shows a preferential binding to high-density lipoproteins (HDL). It also binds a wide range of cellular receptors including the LDL receptor/LDLR, the LDL receptor-related proteins LRP1, LRP2 and LRP8 and the very low-density lipoprotein receptor/VLDLR that mediate the cellular uptake of the APOE-containing lipoprotein particles. Finally, APOE also has a heparin-binding activity and binds heparan-sulfate proteoglycans on the surface of cells, a property that supports the capture and the receptor-mediated uptake of APOE-containing lipoproteins by cells. A main function of APOE is to mediate lipoprotein clearance through the uptake of chylomicrons, VLDLs, and HDLs by hepatocytes. APOE is also involved in the biosynthesis by the liver of VLDLs as well as their uptake by peripheral tissues ensuring the delivery of triglycerides and energy storage in muscle, heart and adipose tissues. By participating in the lipoprotein-mediated distribution of lipids among tissues, APOE plays a critical role in plasma and tissues lipid homeostasis. APOE is also involved in two steps of reverse cholesterol transport, the HDLs-mediated transport of cholesterol from peripheral tissues to the liver, and thereby plays an important role in cholesterol homeostasis. First, it is functionally associated with ABCA1 in the biogenesis of HDLs in tissues. Second, it is enriched in circulating HDLs and mediates their uptake by hepatocytes. APOE also plays an important role in lipid transport in the central nervous system, regulating neuron survival and sprouting. The chain is Apolipoprotein E (APOE) from Ateles geoffroyi (Black-handed spider monkey).